The following is a 594-amino-acid chain: DNA ligase (594 aa).

Residue Glu-280 participates in ATP binding. The active-site N6-AMP-lysine intermediate is the Lys-282. ATP contacts are provided by Arg-287, Arg-316, Glu-345, Phe-385, Arg-456, and Lys-462.

Belongs to the ATP-dependent DNA ligase family. Mg(2+) serves as cofactor.

The enzyme catalyses ATP + (deoxyribonucleotide)n-3'-hydroxyl + 5'-phospho-(deoxyribonucleotide)m = (deoxyribonucleotide)n+m + AMP + diphosphate.. DNA ligase that seals nicks in double-stranded DNA during DNA replication, DNA recombination and DNA repair. In Halorubrum lacusprofundi (strain ATCC 49239 / DSM 5036 / JCM 8891 / ACAM 34), this protein is DNA ligase.